The sequence spans 415 residues: Beta-1,4-glucuronyltransferase 1 (415 aa).

Residues 1 to 8 (MQMSYAIR) lie on the Cytoplasmic side of the membrane. Residues 9-36 (CAFYQLLLAALMLVAMLQLLYLSLLSGL) form a helical; Signal-anchor for type II membrane protein membrane-spanning segment. Residues 37–415 (HGQEEQDQYF…AKYPDSPRHC (379 aa)) are Lumenal-facing. The N-linked (GlcNAc...) asparagine glycan is linked to N204. Residues D227 and D229 each contribute to the Mn(2+) site. A glycan (N-linked (GlcNAc...) asparagine) is linked at N300.

It belongs to the glycosyltransferase 49 family. Interacts with LARGE1 and LARGE2. The cofactor is Mn(2+).

Its subcellular location is the golgi apparatus membrane. The catalysed reaction is 3-O-[beta-D-Xyl-(1-&gt;4)-Rib-ol-P-Rib-ol-P-3-beta-D-GalNAc-(1-&gt;3)-beta-D-GlcNAc-(1-&gt;4)-(O-6-P-alpha-D-Man)]-Thr-[protein] + UDP-alpha-D-glucuronate = 3-O-[beta-D-GlcA-(1-&gt;3)-beta-D-Xyl-(1-&gt;4)-Rib-ol-P-Rib-ol-P-3-beta-D-GalNAc-(1-&gt;3)-beta-D-GlcNAc-(1-&gt;4)-(O-6-P-alpha-D-Man)]-Thr-[protein] + UDP + H(+). It participates in protein modification; protein glycosylation. In terms of biological role, beta-1,4-glucuronyltransferase involved in O-mannosylation of alpha-dystroglycan (DAG1). Transfers a glucuronic acid (GlcA) residue onto a xylose (Xyl) acceptor to produce the glucuronyl-beta-1,4-xylose-beta disaccharide primer, which is further elongated by LARGE1, during synthesis of phosphorylated O-mannosyl glycan. Phosphorylated O-mannosyl glycan is a carbohydrate structure present in alpha-dystroglycan (DAG1), which is required for binding laminin G-like domain-containing extracellular proteins with high affinity. Required for axon guidance; via its function in O-mannosylation of alpha-dystroglycan (DAG1). This is Beta-1,4-glucuronyltransferase 1 from Bos taurus (Bovine).